Consider the following 121-residue polypeptide: Large ribosomal subunit protein eL34A (121 aa).

Belongs to the eukaryotic ribosomal protein eL34 family. Component of the large ribosomal subunit (LSU). Mature yeast ribosomes consist of a small (40S) and a large (60S) subunit. The 40S small subunit contains 1 molecule of ribosomal RNA (18S rRNA) and 33 different proteins (encoded by 57 genes). The large 60S subunit contains 3 rRNA molecules (25S, 5.8S and 5S rRNA) and 46 different proteins (encoded by 81 genes).

Its subcellular location is the cytoplasm. In terms of biological role, component of the ribosome, a large ribonucleoprotein complex responsible for the synthesis of proteins in the cell. The small ribosomal subunit (SSU) binds messenger RNAs (mRNAs) and translates the encoded message by selecting cognate aminoacyl-transfer RNA (tRNA) molecules. The large subunit (LSU) contains the ribosomal catalytic site termed the peptidyl transferase center (PTC), which catalyzes the formation of peptide bonds, thereby polymerizing the amino acids delivered by tRNAs into a polypeptide chain. The nascent polypeptides leave the ribosome through a tunnel in the LSU and interact with protein factors that function in enzymatic processing, targeting, and the membrane insertion of nascent chains at the exit of the ribosomal tunnel. This chain is Large ribosomal subunit protein eL34A, found in Saccharomyces cerevisiae (strain ATCC 204508 / S288c) (Baker's yeast).